Consider the following 329-residue polypeptide: Ribosomal RNA small subunit methyltransferase H (329 aa).

Residues Gly-47–His-49, Asp-67, Phe-93, Asp-115, and Gln-122 each bind S-adenosyl-L-methionine.

It belongs to the methyltransferase superfamily. RsmH family.

Its subcellular location is the cytoplasm. The enzyme catalyses cytidine(1402) in 16S rRNA + S-adenosyl-L-methionine = N(4)-methylcytidine(1402) in 16S rRNA + S-adenosyl-L-homocysteine + H(+). Functionally, specifically methylates the N4 position of cytidine in position 1402 (C1402) of 16S rRNA. The sequence is that of Ribosomal RNA small subunit methyltransferase H from Blochmanniella pennsylvanica (strain BPEN).